Consider the following 419-residue polypeptide: 3-isopropylmalate dehydratase large subunit (419 aa).

[4Fe-4S] cluster is bound by residues Cys300, Cys360, and Cys363.

This sequence belongs to the aconitase/IPM isomerase family. LeuC type 2 subfamily. In terms of assembly, heterodimer of LeuC and LeuD. [4Fe-4S] cluster is required as a cofactor.

It catalyses the reaction (2R,3S)-3-isopropylmalate = (2S)-2-isopropylmalate. Its pathway is amino-acid biosynthesis; L-leucine biosynthesis; L-leucine from 3-methyl-2-oxobutanoate: step 2/4. Functionally, catalyzes the isomerization between 2-isopropylmalate and 3-isopropylmalate, via the formation of 2-isopropylmaleate. The polypeptide is 3-isopropylmalate dehydratase large subunit (Clostridium botulinum (strain Alaska E43 / Type E3)).